The sequence spans 147 residues: Submaxillary gland androgen-regulated protein 3A (147 aa).

The signal sequence occupies residues 1–22 (MKPLNLVLGLCILVGCFLSCEC). Residues 27 to 128 (RRHDPRGPFP…ISITTPTARD (102 aa)) are disordered. Residues 33-105 (GPFPPPPPPH…PTPSIPPTGP (73 aa)) are compositionally biased toward pro residues. A run of 3 repeats spans residues 43-54 (GPGIGRPHPPPF), 55-66 (GPGIGRPPPPPF), and 67-78 (GPGIGRPPPPPP). The 3 X 12 AA tandem repeats of G-P-G-I-G-R-P-[HP]-P-P-P-[PF] stretch occupies residues 43–78 (GPGIGRPHPPPFGPGIGRPPPPPFGPGIGRPPPPPP). Residues 108-127 (TVQATTMPAASISITTPTAR) are compositionally biased toward polar residues.

It belongs to the PROL1/PROL3 family. As to expression, secreted into saliva by submaxillary gland.

The protein resides in the secreted. Its function is as follows. May play a role in protection or detoxification. This chain is Submaxillary gland androgen-regulated protein 3A (Smr3a), found in Mus musculus (Mouse).